A 266-amino-acid chain; its full sequence is Ribosomal RNA small subunit methyltransferase A (266 aa).

Residues N12, L14, G39, E61, D87, and N107 each contribute to the S-adenosyl-L-methionine site.

The protein belongs to the class I-like SAM-binding methyltransferase superfamily. rRNA adenine N(6)-methyltransferase family. RsmA subfamily.

Its subcellular location is the cytoplasm. The enzyme catalyses adenosine(1518)/adenosine(1519) in 16S rRNA + 4 S-adenosyl-L-methionine = N(6)-dimethyladenosine(1518)/N(6)-dimethyladenosine(1519) in 16S rRNA + 4 S-adenosyl-L-homocysteine + 4 H(+). Its function is as follows. Specifically dimethylates two adjacent adenosines (A1518 and A1519) in the loop of a conserved hairpin near the 3'-end of 16S rRNA in the 30S particle. May play a critical role in biogenesis of 30S subunits. The sequence is that of Ribosomal RNA small subunit methyltransferase A from Nitratidesulfovibrio vulgaris (strain DP4) (Desulfovibrio vulgaris).